A 299-amino-acid polypeptide reads, in one-letter code: UDP-N-acetylenolpyruvoylglucosamine reductase (299 aa).

In terms of domain architecture, FAD-binding PCMH-type spans 19 to 192; the sequence is LGGQALAEVR…AAVTLQLRRS (174 aa). The active site involves arginine 169. Cysteine 221 (proton donor) is an active-site residue. Glutamate 292 is a catalytic residue.

Belongs to the MurB family. FAD is required as a cofactor.

It localises to the cytoplasm. The catalysed reaction is UDP-N-acetyl-alpha-D-muramate + NADP(+) = UDP-N-acetyl-3-O-(1-carboxyvinyl)-alpha-D-glucosamine + NADPH + H(+). It participates in cell wall biogenesis; peptidoglycan biosynthesis. In terms of biological role, cell wall formation. This Oleidesulfovibrio alaskensis (strain ATCC BAA-1058 / DSM 17464 / G20) (Desulfovibrio alaskensis) protein is UDP-N-acetylenolpyruvoylglucosamine reductase.